A 709-amino-acid chain; its full sequence is Polyribonucleotide nucleotidyltransferase (709 aa).

Mg(2+) contacts are provided by Asp487 and Asp493. Residues 554 to 613 form the KH domain; that stretch reads PRIHTMKISVEKIKDVIGKGGAVIRQLTEETGTTIEIEDDGTIKIAATDGDQAKEAIRRI. In terms of domain architecture, S1 motif spans 623 to 691; it reads GVIYTGKVAR…RQGRVRLSMK (69 aa).

Belongs to the polyribonucleotide nucleotidyltransferase family. Component of the RNA degradosome, which is a multiprotein complex involved in RNA processing and mRNA degradation. The cofactor is Mg(2+).

It is found in the cytoplasm. It carries out the reaction RNA(n+1) + phosphate = RNA(n) + a ribonucleoside 5'-diphosphate. Involved in mRNA degradation. Catalyzes the phosphorolysis of single-stranded polyribonucleotides processively in the 3'- to 5'-direction. In Vibrio cholerae serotype O1 (strain ATCC 39315 / El Tor Inaba N16961), this protein is Polyribonucleotide nucleotidyltransferase.